The sequence spans 95 residues: uncharacterized protein (95 aa).

It belongs to the inositol monophosphatase superfamily.

This is an uncharacterized protein from Rhizobium leguminosarum bv. phaseoli.